Consider the following 349-residue polypeptide: CCN family member 2 (349 aa).

The first 26 residues, 1–26 (MSATGLSPVRCAFVLLLALCSRPASG), serve as a signal peptide directing secretion. The 72-residue stretch at 27-98 (QDCSGQCQCA…NRKIGVCTAK (72 aa)) folds into the IGFBP N-terminal domain. Cystine bridges form between Cys29-Cys54, Cys33-Cys56, Cys35-Cys57, Cys43-Cys60, Cys68-Cys82, and Cys74-Cys95. Positions 101–167 (APCVFGGTVY…GKCCEEWVCD (67 aa)) constitute a VWFC domain. Residues 198 to 243 (NCLVQTTEWSACSKTCGMGISTRVTNDNAFCRLEKQSRLCMVRPCE) form the TSP type-1 domain. The heparin-binding stretch occupies residues 247-349 (EENIKKGKKC…YYRKMYGDMA (103 aa)). 5 cysteine pairs are disulfide-bonded: Cys256/Cys293, Cys273/Cys307, Cys284/Cys323, Cys287/Cys325, and Cys292/Cys329. The region spanning 256 to 330 (CIRTPKISKP…KTCACHYNCP (75 aa)) is the CTCK domain.

It belongs to the CCN family. Monomer. Interacts with TSKU.

Its subcellular location is the secreted. The protein resides in the extracellular space. It is found in the extracellular matrix. Functionally, major connective tissue mitoattractant secreted by vascular endothelial cells. Promotes proliferation and differentiation of chondrocytes. Is involved in the stimulation of osteoblast differentiation and has a critical role in osteogenesis. Mediates heparin- and divalent cation-dependent cell adhesion in many cell types including fibroblasts, myofibroblasts, endothelial and epithelial cells. Enhances fibroblast growth factor-induced DNA synthesis. The sequence is that of CCN family member 2 (CCN2) from Sus scrofa (Pig).